A 312-amino-acid polypeptide reads, in one-letter code: Olfactory receptor 2T10 (312 aa).

At Met1–Gly25 the chain is on the extracellular side. N-linked (GlcNAc...) asparagine glycosylation is present at Asn5. Residues Arg26 to Ile49 traverse the membrane as a helical segment. The Cytoplasmic portion of the chain corresponds to His50–Thr57. A helical membrane pass occupies residues Pro58–Pro79. The Extracellular portion of the chain corresponds to Lys80–Gln100. The cysteines at positions 97 and 189 are disulfide-linked. A helical membrane pass occupies residues Met101–Tyr120. Residues Asp121–Arg139 lie on the Cytoplasmic side of the membrane. Residues Val140 to Met158 form a helical membrane-spanning segment. Residues Leu159–Tyr195 are Extracellular-facing. The helical transmembrane segment at Lys196–Tyr219 threads the bilayer. At Tyr220–Lys236 the chain is on the cytoplasmic side. Residues Ala237–Tyr259 traverse the membrane as a helical segment. Residues Met260–Met272 are Extracellular-facing. Residues Met273–Phe292 form a helical membrane-spanning segment. The Cytoplasmic portion of the chain corresponds to Arg293–Tyr312.

The protein belongs to the G-protein coupled receptor 1 family.

Its subcellular location is the cell membrane. Functionally, odorant receptor. This chain is Olfactory receptor 2T10 (OR2T10), found in Homo sapiens (Human).